Consider the following 387-residue polypeptide: Succinate--CoA ligase [ADP-forming] subunit beta (387 aa).

The 228-residue stretch at 9–236 (KELFAKHNVP…RAATDPLELK (228 aa)) folds into the ATP-grasp domain. ATP is bound by residues lysine 45, 52 to 54 (GRG), serine 94, and glutamate 99. 2 residues coordinate Mg(2+): asparagine 191 and aspartate 205. Substrate is bound by residues asparagine 256 and 318–320 (GIT).

This sequence belongs to the succinate/malate CoA ligase beta subunit family. In terms of assembly, heterotetramer of two alpha and two beta subunits. Mg(2+) is required as a cofactor.

It catalyses the reaction succinate + ATP + CoA = succinyl-CoA + ADP + phosphate. It carries out the reaction GTP + succinate + CoA = succinyl-CoA + GDP + phosphate. The protein operates within carbohydrate metabolism; tricarboxylic acid cycle; succinate from succinyl-CoA (ligase route): step 1/1. In terms of biological role, succinyl-CoA synthetase functions in the citric acid cycle (TCA), coupling the hydrolysis of succinyl-CoA to the synthesis of either ATP or GTP and thus represents the only step of substrate-level phosphorylation in the TCA. The beta subunit provides nucleotide specificity of the enzyme and binds the substrate succinate, while the binding sites for coenzyme A and phosphate are found in the alpha subunit. In Mycobacterium marinum (strain ATCC BAA-535 / M), this protein is Succinate--CoA ligase [ADP-forming] subunit beta.